The chain runs to 1026 residues: Contactin-4 (1026 aa).

A signal peptide spans 1–18 (MRLPWELLVLQSFILCLA). Ig-like C2-type domains lie at 32–117 (PSPV…AKLQ), 122–207 (DNFK…KVLG), 225–311 (PKIE…GQLT), 316–400 (PNWI…AELS), 406–493 (PDFS…GNLV), and 497–586 (PTRV…DRLS). 6 cysteine pairs are disulfide-bonded: Cys-50-Cys-100, Cys-144-Cys-194, Cys-247-Cys-295, Cys-337-Cys-384, Cys-429-Cys-477, and Cys-519-Cys-576. N-linked (GlcNAc...) asparagine glycans are attached at residues Asn-65, Asn-90, and Asn-191. Residues Asn-370, Asn-375, and Asn-466 are each glycosylated (N-linked (GlcNAc...) asparagine). 4 consecutive Fibronectin type-III domains span residues 599 to 697 (PPEA…TEEA), 702 to 799 (TPAN…SAEE), 804 to 899 (PPAS…TRKP), and 900 to 995 (PPSQ…ISNA). A disordered region spans residues 685–710 (PSRPSEKRRTEEALPEVTPANVSGGG). Residues 687-696 (RPSEKRRTEE) show a composition bias toward basic and acidic residues. Asn-705, Asn-764, Asn-858, Asn-893, Asn-911, Asn-929, and Asn-954 each carry an N-linked (GlcNAc...) asparagine glycan. Over residues 886 to 896 (GPSSATVNVTT) the composition is skewed to polar residues. Residues 886 to 907 (GPSSATVNVTTRKPPPSQPPGN) form a disordered region. Residue Ser-1000 is the site of GPI-anchor amidated serine attachment. A propeptide spans 1001–1026 (GASTSNACTLSAISTIMISLTARSSL) (removed in mature form).

It belongs to the immunoglobulin superfamily. Contactin family. In terms of assembly, interacts with PTPRG. Mainly expressed in brain. Highly expressed in cerebellum and weakly expressed in corpus callosum, caudate nucleus, amygdala and spinal cord. Also expressed in testis, pancreas, thyroid, uterus, small intestine and kidney. Not expressed in skeletal muscle. Isoform 2 is weakly expressed in cerebral cortex.

The protein resides in the cell membrane. It localises to the secreted. In terms of biological role, contactins mediate cell surface interactions during nervous system development. Has some neurite outgrowth-promoting activity. May be involved in synaptogenesis. This Homo sapiens (Human) protein is Contactin-4 (CNTN4).